A 324-amino-acid chain; its full sequence is Methenyltetrahydromethanopterin cyclohydrolase (324 aa).

The protein belongs to the MCH family.

The protein resides in the cytoplasm. The enzyme catalyses 5,10-methenyl-5,6,7,8-tetrahydromethanopterin + H2O = N(5)-formyl-5,6,7,8-tetrahydromethanopterin + H(+). The protein operates within one-carbon metabolism; methanogenesis from CO(2); 5,10-methenyl-5,6,7,8-tetrahydromethanopterin from CO(2): step 3/3. Functionally, catalyzes the reversible interconversion of 5-formyl-H(4)MPT to methenyl-H(4)MPT(+). The sequence is that of Methenyltetrahydromethanopterin cyclohydrolase from Methanococcus aeolicus (strain ATCC BAA-1280 / DSM 17508 / OCM 812 / Nankai-3).